We begin with the raw amino-acid sequence, 1321 residues long: Multidrug resistance protein pgp-1 (1321 aa).

The Cytoplasmic segment spans residues 1–77; the sequence is MLRNGSLRQS…YTTTLEKLLL (77 aa). The region spanning 77–381 is the ABC transmembrane type-1 1 domain; sequence LFIGTLVAVI…AGPQLAVLGT (305 aa). A helical transmembrane segment spans residues 78–98; the sequence is FIGTLVAVITGAGLPLMSILQ. N-linked (GlcNAc...) asparagine glycans are attached at residues Asn115 and Asn125. A helical membrane pass occupies residues 144-164; sequence AMTVGMWAAGQITVTCYLYVA. An N-linked (GlcNAc...) asparagine glycan is attached at Asn190. A run of 4 helical transmembrane segments spans residues 213 to 233, 240 to 260, 321 to 341, and 350 to 370; these read KIGM…VAFT, LVML…AKSM, ISFG…FYIG, and LNFG…MALG. Residues 371–753 lie on the Cytoplasmic side of the membrane; that stretch reads LAGPQLAVLG…LYHARPHALS (383 aa). One can recognise an ABC transporter 1 domain in the interval 416 to 652; it reads ITVENVHFTY…QGLYYDLVTA (237 aa). 451-458 is a binding site for ATP; sequence GSSGCGKS. Helical transmembrane passes span 754–774 and 798–818; these read LFIG…YSVF and LMFL…TFFM. The ABC transmembrane type-1 2 domain maps to 754–1043; the sequence is LFIGMSTATI…ATSYFPEYAK (290 aa). N-linked (GlcNAc...) asparagine glycosylation is present at Asn850. Transmembrane regions (helical) follow at residues 874-894, 895-915, 978-998, and 1017-1037; these read FSTV…AFFY, GWQM…GQYL, IQGL…TCAY, and VLRV…ATSY. Residues 1038–1321 are Cytoplasmic-facing; that stretch reads FPEYAKATFA…LTQKQMTEKK (284 aa). An ABC transporter 2 domain is found at 1077–1315; sequence VIFKNVRFAY…KGAYYKLTQK (239 aa). Residue 1112–1119 participates in ATP binding; the sequence is GPSGCGKS.

This sequence belongs to the ABC transporter superfamily. ABCB family. Multidrug resistance exporter (TC 3.A.1.201) subfamily. In terms of tissue distribution, intestinal cells.

Its subcellular location is the membrane. The enzyme catalyses ATP + H2O + xenobioticSide 1 = ADP + phosphate + xenobioticSide 2.. Functionally, energy-dependent efflux pump responsible for decreased drug accumulation in multidrug-resistant cells. The protein is Multidrug resistance protein pgp-1 (pgp-1) of Caenorhabditis elegans.